Reading from the N-terminus, the 483-residue chain is Glutamate--tRNA ligase (483 aa).

Residues 11 to 21 carry the 'HIGH' region motif; the sequence is PSPTGLLHIGN. Positions 255-259 match the 'KMSKS' region motif; the sequence is KLSKR. Position 258 (K258) interacts with ATP.

This sequence belongs to the class-I aminoacyl-tRNA synthetase family. Glutamate--tRNA ligase type 1 subfamily. As to quaternary structure, monomer.

It is found in the cytoplasm. It catalyses the reaction tRNA(Glu) + L-glutamate + ATP = L-glutamyl-tRNA(Glu) + AMP + diphosphate. Its function is as follows. Catalyzes the attachment of glutamate to tRNA(Glu) in a two-step reaction: glutamate is first activated by ATP to form Glu-AMP and then transferred to the acceptor end of tRNA(Glu). This Lactococcus lactis subsp. lactis (strain IL1403) (Streptococcus lactis) protein is Glutamate--tRNA ligase.